The sequence spans 161 residues: Type-1 angiotensin II receptor-associated protein (161 aa).

The Extracellular segment spans residues 1 to 26 (MELPAVNLKVILLVHWLLTTWGCLVF). Residues 27–47 (SSSYAWGNFTILALGVWAVAQ) traverse the membrane as a helical segment. Residues 48–53 (RDSIDA) lie on the Cytoplasmic side of the membrane. A helical membrane pass occupies residues 54 to 74 (IGMFLGGLVATIFLDIIYISI). The Extracellular portion of the chain corresponds to 75–86 (FYSSVATGDTGR). Residues 87–107 (FGAGMAILSLLLKPFSCCLVY) form a helical membrane-spanning segment. At 108 to 161 (HMHRERGGELPLRPDFFGPSQEHSAYQTIDSSSDAAADPFASLENKGQAVPRGY) the chain is on the cytoplasmic side. Positions 110-122 (HRERGGELPLRPD) are interaction with AGTR1. Residue S127 is modified to Phosphoserine. Residue T135 is modified to Phosphothreonine. S138 is subject to Phosphoserine.

In terms of assembly, interacts with RACK1, and with the C-terminal region of AGTR1. Ubiquitous but more abundant in kidney, testis and heart.

It localises to the endoplasmic reticulum membrane. The protein resides in the golgi apparatus membrane. The protein localises to the cytoplasmic vesicle membrane. Appears to be a negative regulator of type-1 angiotensin II receptor-mediated signaling by regulating receptor internalization as well as mechanism of receptor desensitization such as phosphorylation. Also induces a decrease in angiotensin II-stimulated transcriptional activity. May play a role of negative regulator in cardiomyocyte hypertrophy induced by angiotensin II through an inhibition of p38 mitogen-activated protein kinase pathway. The polypeptide is Type-1 angiotensin II receptor-associated protein (Agtrap) (Mus musculus (Mouse)).